Reading from the N-terminus, the 662-residue chain is MHRASANSLLNSVSGSMMWRNQSSGRRPSKRLSDNEATLSTINSILGAEDMLSKNLLSYLPPNNEEIDMIYPSEQIMTFIEMLHGHKNFFKGQTIHNALRDSAVLKKQIAYGVAQALLNSVSIQQIHDEWKRHVRSFPFHNKKLSFQDYFSVWAHAIKQVILGDISNIINFILQSIDNSHYNRYVDWICTVGIVPFMRTTHTAPNLYNLLQQVSSKLIHDIVRHKQNIVTPVLLGLSSVIIPDFHNIKIFRDRNSEQISCFKNKKAIAFFTYSTPYVIRNRLMLTTPLAHLSPELKKHNSLRRHQKMCQLLNTFPIKVLTTAKTDVTNKKIMDMIEKEEKSSDAKKSLIKFLLNLSDSKSKIGIRDSVEGFIQEITPSIIDQNKLMLNRGQFRKRSAIDTGERDVRDLFKKQIIKCMEEQIQTQMDEIETLKTTNQMFERKIKDLHSLLETNNDCDRYNPNLDHDLENLSLSRALNIVQRLPFTSVSIDDTRSVANSFFSQYIPDTQYADKRIDQLWEMEYMRTFRLRKNVNNQGQEESITYSNYSIELLIVPFLRRFLNIYNLESIPEEFLFLSLGEILLAIYESSKIKHYLRLVYVRELNQISEVFNLTQTHPENSEPIFDSNIFSPNPENEILEKIKRIRNLRRIQHLTRPNYPKGDQD.

The protein belongs to the herpesviridae portal protein family. Homododecamerizes. Interacts with terminase subunits TRM1 and TRM3.

Its subcellular location is the virion. The protein localises to the host nucleus. Forms a portal in the viral capsid through which viral DNA is translocated during DNA packaging. Assembles as a dodecamer at a single fivefold axe of the T=16 icosahedric capsid. Binds to the molecular motor that translocates the viral DNA, termed terminase. This is Portal protein (U76) from Human herpesvirus 6A (strain Uganda-1102) (HHV-6 variant A).